We begin with the raw amino-acid sequence, 605 residues long: Replication protein E1 (605 aa).

The Nuclear localization signal signature appears at 84 to 86 (KRK). Phosphoserine; by host is present on residues serine 90 and serine 94. The span at 90–101 (SSQNSSGSEASE) shows a compositional bias: low complexity. A disordered region spans residues 90–112 (SSQNSSGSEASETPVKRRKSGAK). Position 102 is a phosphothreonine; by host CDK1 (threonine 102). A Nuclear localization signal motif is present at residues 105–108 (KRRK). Serine 109 bears the Phosphoserine; by host mark. Residues 142–308 (EEQAISHLHL…QTTLNESLQT (167 aa)) are DNA-binding region. An SF3 helicase domain is found at 407 to 557 (IELITFINAL…CTDESGEQPF (151 aa)). Position 433 to 440 (433 to 440 (GPPNTGKS)) interacts with ATP. Lysine 514 is covalently cross-linked (Glycyl lysine isopeptide (Lys-Gly) (interchain with G-Cter in SUMO)). The interval 582 to 605 (EDSEEDGDSMRTFTCSARNTNAVD) is disordered. Residues 592–605 (RTFTCSARNTNAVD) are compositionally biased toward polar residues.

Belongs to the papillomaviridae E1 protein family. Can form hexamers. Interacts with E2 protein; this interaction increases E1 DNA binding specificity. Interacts with host DNA polymerase subunit POLA2. Interacts with host single stranded DNA-binding protein RPA1. Interacts with host TOP1; this interaction stimulates the enzymatic activity of TOP1. Post-translationally, phosphorylated. Probably phosphorylated by host PKA and PKC at Ser-109. Phosphorylated by host CDK1 at Thr-102. In terms of processing, phosphorylated. Sumoylated.

The protein localises to the host nucleus. It carries out the reaction Couples ATP hydrolysis with the unwinding of duplex DNA by translocating in the 3'-5' direction.. The enzyme catalyses ATP + H2O = ADP + phosphate + H(+). Its function is as follows. ATP-dependent DNA 3'-5' helicase required for initiation of viral DNA replication. It forms a complex with the viral E2 protein. The E1-E2 complex binds to the replication origin which contains binding sites for both proteins. During the initial step, a dimer of E1 interacts with a dimer of protein E2 leading to a complex that binds the viral origin of replication with high specificity. Then, a second dimer of E1 displaces the E2 dimer in an ATP-dependent manner to form the E1 tetramer. Following this, two E1 monomers are added to each half of the site, which results in the formation of two E1 trimers on the viral ori. Subsequently, two hexamers will be created. The double hexamer acts as a bi-directional helicase machinery and unwinds the viral DNA and then recruits the host DNA polymerase to start replication. The protein is Replication protein E1 of Bovine papillomavirus type 1.